The primary structure comprises 339 residues: Glutamyl-tRNA reductase (339 aa).

Residues 50 to 53 (TCHR), S102, 107 to 109 (ETE), and Q113 contribute to the substrate site. C51 (nucleophile) is an active-site residue. 181 to 186 (GYSDIN) provides a ligand contact to NADP(+).

Belongs to the glutamyl-tRNA reductase family. Homodimer.

It catalyses the reaction (S)-4-amino-5-oxopentanoate + tRNA(Glu) + NADP(+) = L-glutamyl-tRNA(Glu) + NADPH + H(+). It participates in porphyrin-containing compound metabolism; protoporphyrin-IX biosynthesis; 5-aminolevulinate from L-glutamyl-tRNA(Glu): step 1/2. Functionally, catalyzes the NADPH-dependent reduction of glutamyl-tRNA(Glu) to glutamate 1-semialdehyde (GSA). This Chlamydia pneumoniae (Chlamydophila pneumoniae) protein is Glutamyl-tRNA reductase.